Consider the following 679-residue polypeptide: Single-strand DNA endonuclease ASTE1 (679 aa).

Positions 351–400 (TILPTQVENMQQPNAHRISQPIRQIIYGLLLNASPHLDKTSWNALPPQPL) are interaction with SHLD2. The tract at residues 625–645 (RSNSKKKRQKKQNTSCSKNRG) is disordered. The span at 626 to 635 (SNSKKKRQKK) shows a compositional bias: basic residues.

Belongs to the asteroid family. As to quaternary structure, interacts with SHLD1, SHLD2, SHLD3, RIF1 and MAD2L2/REV7.

In terms of biological role, structure-specific DNA endonuclease that specifically cleaves single-stranded DNA and 3' overhang DNA. Contributes to the control of DNA double-strand break repair choice by antagonizing BRCA1-dependent homologous recombination (HR) and promoting non-homologous end-joining (NHEJ). Recruited to the single-stranded DNA ends by SHLD2 and cleaves the 3' exposed DNA ends, therefore inhibiting DNA end resection (necessary for HR) and promoting DNA end protection (necessary for NHEJ). The chain is Single-strand DNA endonuclease ASTE1 (ASTE1) from Pongo abelii (Sumatran orangutan).